Reading from the N-terminus, the 492-residue chain is Phosphoenolpyruvate carboxylase (492 aa).

This sequence belongs to the PEPCase type 2 family. In terms of assembly, homotetramer. It depends on Mg(2+) as a cofactor.

It catalyses the reaction oxaloacetate + phosphate = phosphoenolpyruvate + hydrogencarbonate. Its function is as follows. Catalyzes the irreversible beta-carboxylation of phosphoenolpyruvate (PEP) to form oxaloacetate (OAA), a four-carbon dicarboxylic acid source for the tricarboxylic acid cycle. The chain is Phosphoenolpyruvate carboxylase from Halobacterium salinarum (strain ATCC 29341 / DSM 671 / R1).